A 233-amino-acid polypeptide reads, in one-letter code: 2-C-methyl-D-erythritol 4-phosphate cytidylyltransferase (233 aa).

The protein belongs to the IspD/TarI cytidylyltransferase family. IspD subfamily.

It carries out the reaction 2-C-methyl-D-erythritol 4-phosphate + CTP + H(+) = 4-CDP-2-C-methyl-D-erythritol + diphosphate. It participates in isoprenoid biosynthesis; isopentenyl diphosphate biosynthesis via DXP pathway; isopentenyl diphosphate from 1-deoxy-D-xylulose 5-phosphate: step 2/6. Its function is as follows. Catalyzes the formation of 4-diphosphocytidyl-2-C-methyl-D-erythritol from CTP and 2-C-methyl-D-erythritol 4-phosphate (MEP). The protein is 2-C-methyl-D-erythritol 4-phosphate cytidylyltransferase of Nitrosomonas eutropha (strain DSM 101675 / C91 / Nm57).